The chain runs to 296 residues: MANLNKRPDWIKVKAPNSTEYYNTKDLIKNLRLNTVCEEAACPNIGECWSKKHTTVMILGSVCTRACRFCNVKTGRPDLLDPYEPQRLAEAVQKLNLKHVVITSVDRDDLEDGGASHFAECISEIRKSSPNTTIEILTPDFLRKEGAAEIIANAKPDVFNHNVETVPSLYKTIRPGARYYNSLSLLHNIKKLSPEIFTKSGMMVGLGEEINEVVQVIDDLREAKVDFLTIGQYLQPTKNHAEVAKYVTPEEFKYLERVAKTKGFLMVSASPLTRSSYHADEDFQKLKENYQQKLVS.

Residues Cys-37, Cys-42, Cys-48, Cys-63, Cys-67, Cys-70, and Ser-276 each contribute to the [4Fe-4S] cluster site. The Radical SAM core domain maps to 49–265 (WSKKHTTVMI…ERVAKTKGFL (217 aa)).

Belongs to the radical SAM superfamily. Lipoyl synthase family. [4Fe-4S] cluster is required as a cofactor.

Its subcellular location is the cytoplasm. The enzyme catalyses [[Fe-S] cluster scaffold protein carrying a second [4Fe-4S](2+) cluster] + N(6)-octanoyl-L-lysyl-[protein] + 2 oxidized [2Fe-2S]-[ferredoxin] + 2 S-adenosyl-L-methionine + 4 H(+) = [[Fe-S] cluster scaffold protein] + N(6)-[(R)-dihydrolipoyl]-L-lysyl-[protein] + 4 Fe(3+) + 2 hydrogen sulfide + 2 5'-deoxyadenosine + 2 L-methionine + 2 reduced [2Fe-2S]-[ferredoxin]. It participates in protein modification; protein lipoylation via endogenous pathway; protein N(6)-(lipoyl)lysine from octanoyl-[acyl-carrier-protein]: step 2/2. In terms of biological role, catalyzes the radical-mediated insertion of two sulfur atoms into the C-6 and C-8 positions of the octanoyl moiety bound to the lipoyl domains of lipoate-dependent enzymes, thereby converting the octanoylated domains into lipoylated derivatives. This chain is Lipoyl synthase, found in Rickettsia conorii (strain ATCC VR-613 / Malish 7).